We begin with the raw amino-acid sequence, 414 residues long: Isocitrate dehydrogenase [NADP] cytoplasmic (414 aa).

Ser2 carries the post-translational modification N-acetylserine. Position 42 is a phosphotyrosine (Tyr42). Position 75–77 (75–77 (TIT)) interacts with NADP(+). Thr77 provides a ligand contact to substrate. At Lys81 the chain carries N6-acetyllysine. Arg82 serves as a coordination point for NADP(+). Residues 94-100 (SPNGTIR) and Arg109 each bind substrate. N6-succinyllysine is present on Lys126. Substrate is bound by residues Arg132 and Lys212. N6-acetyllysine is present on residues Lys224, Lys233, and Lys243. Asp252 serves as a coordination point for Mn(2+). Residue Lys260 participates in NADP(+) binding. Residues Asp275 and Asp279 each coordinate Mn(2+). 310–315 (GTVTRH) contacts NADP(+). The residue at position 321 (Lys321) is an N6-acetyllysine. Asn328 contacts NADP(+). At Ser389 the chain carries Phosphoserine. Lys400 is modified (N6-succinyllysine).

It belongs to the isocitrate and isopropylmalate dehydrogenases family. Homodimer. Mg(2+) is required as a cofactor. The cofactor is Mn(2+). Post-translationally, acetylation at Lys-374 dramatically reduces catalytic activity.

The protein resides in the cytoplasm. It localises to the cytosol. It catalyses the reaction D-threo-isocitrate + NADP(+) = 2-oxoglutarate + CO2 + NADPH. Functionally, catalyzes the NADP(+)-dependent oxidative decarboxylation of isocitrate (D-threo-isocitrate) to 2-ketoglutarate (2-oxoglutarate), which is required by other enzymes such as the phytanoyl-CoA dioxygenase. Plays a critical role in the generation of NADPH, an important cofactor in many biosynthesis pathways. May act as a corneal epithelial crystallin and may be involved in maintaining corneal epithelial transparency. This chain is Isocitrate dehydrogenase [NADP] cytoplasmic (IDH1), found in Pongo abelii (Sumatran orangutan).